A 250-amino-acid polypeptide reads, in one-letter code: 5'-nucleotidase SurE (250 aa).

Asp-8, Asp-9, Ser-40, and Asn-95 together coordinate a divalent metal cation.

It belongs to the SurE nucleotidase family. A divalent metal cation is required as a cofactor.

Its subcellular location is the cytoplasm. The catalysed reaction is a ribonucleoside 5'-phosphate + H2O = a ribonucleoside + phosphate. Its function is as follows. Nucleotidase that shows phosphatase activity on nucleoside 5'-monophosphates. The protein is 5'-nucleotidase SurE of Nitratidesulfovibrio vulgaris (strain ATCC 29579 / DSM 644 / CCUG 34227 / NCIMB 8303 / VKM B-1760 / Hildenborough) (Desulfovibrio vulgaris).